The sequence spans 343 residues: UPF0283 membrane protein blr7254 (343 aa).

A run of 3 helical transmembrane segments spans residues 64–84 (GALFWSGLAGLTLLGVGLGVV), 97–117 (LGFVGLAFAFVTALALAVVIG), and 214–234 (IVTAVSPRAAIDVMFVFVAAL).

The protein belongs to the UPF0283 family.

The protein localises to the cell inner membrane. The sequence is that of UPF0283 membrane protein blr7254 from Bradyrhizobium diazoefficiens (strain JCM 10833 / BCRC 13528 / IAM 13628 / NBRC 14792 / USDA 110).